A 238-amino-acid polypeptide reads, in one-letter code: uncharacterized protein (238 aa).

The region spanning 3–116 (RVIIVDDEQP…RLAKTLTRLS (114 aa)) is the Response regulatory domain. A 4-aspartylphosphate modification is found at D54. The 102-residue stretch at 136–237 (IPCSGHNRIF…LKSLKEKLGI (102 aa)) folds into the HTH LytTR-type domain.

This is an uncharacterized protein from Yersinia pestis.